A 342-amino-acid chain; its full sequence is MRAPEFQANAITSTGCDVCLDPQKSFAKLFKRTIILLAGPTGSGKTDVSLCLAPMVDGEIVSVDSMQVYRGMDIGTAKVSLEARQRIPHYLIDICHVQELFNAVDFYYQATQACQNILSRNKVPILVGGSGFYFHTFLSGPPEGPPADREFRDHLALYIQKNGLSLLYDNLCMKDPEYARTITKNDKNKIVRALEIIHLTGKKVSEHNWSMEAKEPREYNCRGWFLSSPRDLLRDNIQLRCRRMLEDNLIDEVHRLLEQGIRENPSASKAIGYREWIDFIDQGSPKEAYEDVKNKFIANTLYYIKKQRTWFKRYPMFRELPTLGLTAETIAEKIAEDYFLHG.

39–46 (GPTGSGKT) serves as a coordination point for ATP. Residue 41 to 46 (TGSGKT) coordinates substrate. The tract at residues 64–67 (DSMQ) is interaction with substrate tRNA.

It belongs to the IPP transferase family. In terms of assembly, monomer. Mg(2+) serves as cofactor.

The catalysed reaction is adenosine(37) in tRNA + dimethylallyl diphosphate = N(6)-dimethylallyladenosine(37) in tRNA + diphosphate. Catalyzes the transfer of a dimethylallyl group onto the adenine at position 37 in tRNAs that read codons beginning with uridine, leading to the formation of N6-(dimethylallyl)adenosine (i(6)A). This Chlamydia felis (strain Fe/C-56) (Chlamydophila felis) protein is tRNA dimethylallyltransferase.